Consider the following 271-residue polypeptide: Short chain dehydrogenase asqE (271 aa).

3 residues coordinate NADP(+): Ile-22, Asp-70, and Asn-99. Catalysis depends on proton donor residues Ser-152 and Ser-153. The NADP(+) site is built by Tyr-167, Lys-171, and Thr-203. Tyr-167 functions as the Proton acceptor in the catalytic mechanism. The active-site Lowers pKa of active site Tyr is the Lys-171.

The protein belongs to the short-chain dehydrogenases/reductases (SDR) family.

The enzyme catalyses a primary alcohol + NAD(+) = an aldehyde + NADH + H(+). The catalysed reaction is a secondary alcohol + NAD(+) = a ketone + NADH + H(+). Its pathway is secondary metabolite biosynthesis. The protein operates within alkaloid biosynthesis. It functions in the pathway mycotoxin biosynthesis. In terms of biological role, short chain dehydrogenase; part of the gene cluster that mediates the biosynthesis of the aspoquinolone mycotoxins. The role of asqE within the aspoquinolone pathway has still to be determined. The first step of the pathway is catalyzed by the nonribosomal peptide synthetase asqK that condenses anthranilic acid and O-methyl-L-tyrosine to produce 4'-methoxycyclopeptin. 4'-methoxycyclopeptin is then converted to 4'-methoxydehydrocyclopeptin by the ketoglutarate-dependent dioxygenase asqJ. AsqJ also converts its first product 4'-methoxydehydrocyclopeptin to 4'-methoxycyclopenin. The following conversion of 4'-methoxycyclopenin into 4'-methoxyviridicatin is catalyzed by the cyclopenase asqI. 4'-methoxyviridicatin is the precursor of quinolone natural products, and is further converted to quinolinone B. The prenyltransferase asqH1 then catalyzes the canonical Friedel-Crafts alkylation of quinolinone B with dimethylallyl cation to yield dimethylallyl quinolone, which is subjected to FAD-dependent dehydrogenation by the FAD-linked oxidoreductase asqF to yield conjugated aryl diene. The delta(3') double bond then serves as the site of the second alkylation with DMAPP catalyzed by the prenyltransferase asqH2 to yield a carbenium ion intermediate, which can be attacked by H(2)O to yield a styrenyl quinolone containing a C3'-hydroxyprenyl chain. The FAD-dependent monooxygenase asqG performs epoxidation of the terminal C7'-C8' olefin. Finally, after dehydratation of the epoxide at C3 by asqC, the quinolone epoxide rearrangement protein asqO catalyzes an enzymatic 3-exo-tet cyclization to yield the cyclopropyl-THF ring system in aspoquinolone. This is Short chain dehydrogenase asqE from Emericella nidulans (strain FGSC A4 / ATCC 38163 / CBS 112.46 / NRRL 194 / M139) (Aspergillus nidulans).